A 158-amino-acid chain; its full sequence is Endoribonuclease YbeY (158 aa).

Zn(2+) is bound by residues His124, His128, and His134.

It belongs to the endoribonuclease YbeY family. Requires Zn(2+) as cofactor.

The protein resides in the cytoplasm. Functionally, single strand-specific metallo-endoribonuclease involved in late-stage 70S ribosome quality control and in maturation of the 3' terminus of the 16S rRNA. This chain is Endoribonuclease YbeY, found in Caldanaerobacter subterraneus subsp. tengcongensis (strain DSM 15242 / JCM 11007 / NBRC 100824 / MB4) (Thermoanaerobacter tengcongensis).